The following is a 400-amino-acid chain: F-box/LRR-repeat protein 14 (400 aa).

An F-box domain is found at 2–48; sequence ETHISCLFPELLAMIFGYLDVRDKGRAAQVCTAWRDAAYHKSVWRGV. The required for down-regulation of SNAI1 stretch occupies residues 2–48; sequence ETHISCLFPELLAMIFGYLDVRDKGRAAQVCTAWRDAAYHKSVWRGV. LRR repeat units lie at residues 144–163, 170–191, 203–225, 229–250, and 254–275; these read GLEVLELGGCSNITNTGLLL, RLKSLNLRSCRHLSDVGIGHLA, GLEQLTLQDCQKLTDLSLKHISR, GLRLLNLSFCGGISDAGLLHLS, and SLRSLNLRSCDNISDTGIMHLA.

As to quaternary structure, part of a SCF (SKP1-cullin-F-box) ubiquitin-protein ligase complex. Interacts with SKP1 and CUL1. Interacts with SNAI1; the interaction requires the phosphorylation of the two serine residues in the substrate destruction motif D-S-G-X(2,3,4)-S.

It is found in the cytoplasm. Functionally, substrate-recognition component of some SCF (SKP1-CUL1-F-box protein)-type E3 ubiquitin-protein ligase complexes. The SCF(FBXL14) complex acts by mediating ubiquitination and subsequent degradation of SNAI1. This chain is F-box/LRR-repeat protein 14 (FBXL14), found in Bos taurus (Bovine).